A 91-amino-acid polypeptide reads, in one-letter code: UPF0298 protein spyM18_0447 (91 aa).

Belongs to the UPF0298 family.

Its subcellular location is the cytoplasm. This is UPF0298 protein spyM18_0447 from Streptococcus pyogenes serotype M18 (strain MGAS8232).